Consider the following 76-residue polypeptide: Small ribosomal subunit protein bS18 (76 aa).

The protein belongs to the bacterial ribosomal protein bS18 family. In terms of assembly, part of the 30S ribosomal subunit. Forms a tight heterodimer with protein bS6.

Its function is as follows. Binds as a heterodimer with protein bS6 to the central domain of the 16S rRNA, where it helps stabilize the platform of the 30S subunit. This Alkaliphilus metalliredigens (strain QYMF) protein is Small ribosomal subunit protein bS18.